Reading from the N-terminus, the 39-residue chain is Bacteriocin E50-52 (39 aa).

Its subcellular location is the secreted. Its function is as follows. Bacteriocin active against the Gram-negative bacteria C.jejuni, Y.enterocolitica and Y.pseudotuberculosis, and the Gram-positive bacteria S.aureus, S.epidermidis, L.monocytogenes and Listeria spp. When added to the drinking water of chickens, causes a decrease in the levels of C.jejuni and S.enteritidis in the ceca, and in the levels of S.enteritidis in the liver and spleen. In Enterococcus faecium (Streptococcus faecium), this protein is Bacteriocin E50-52.